The primary structure comprises 698 residues: Methionine--tRNA ligase (698 aa).

The 'HIGH' region signature appears at 21 to 31 (PYANGPLHFGH). Zn(2+) is bound by residues C153, C156, C166, and C169. The short motif at 341-345 (QFSKS) is the 'KMSKS' region element. K344 lines the ATP pocket. The tRNA-binding domain occupies 599–698 (DFRKLDLRVG…EDVAPGSLVS (100 aa)).

Belongs to the class-I aminoacyl-tRNA synthetase family. MetG type 1 subfamily. As to quaternary structure, homodimer. Zn(2+) serves as cofactor.

It is found in the cytoplasm. It carries out the reaction tRNA(Met) + L-methionine + ATP = L-methionyl-tRNA(Met) + AMP + diphosphate. Functionally, is required not only for elongation of protein synthesis but also for the initiation of all mRNA translation through initiator tRNA(fMet) aminoacylation. This is Methionine--tRNA ligase from Protochlamydia amoebophila (strain UWE25).